Here is a 228-residue protein sequence, read N- to C-terminus: Sugar fermentation stimulation protein homolog (228 aa).

This sequence belongs to the SfsA family.

The chain is Sugar fermentation stimulation protein homolog from Desulfitobacterium hafniense (strain DSM 10664 / DCB-2).